A 20-amino-acid polypeptide reads, in one-letter code: SHDVNINIQFGFENPQQVVD.

This is Unknown protein NF045 from 2D-PAGE from Naegleria fowleri (Brain eating amoeba).